We begin with the raw amino-acid sequence, 502 residues long: Inosine-5'-monophosphate dehydrogenase 2 (502 aa).

Position 2 is an N-acetylserine (serine 2). In terms of domain architecture, CBS spans 166-225; sequence MKSCENKDYYVPWDIDLDKIEAVLEDKQKGFVVLEKEGETVNVVTKDDVERVKGYPKLGS. Residues 264–266 and 314–316 contribute to the NAD(+) site; these read DSS and GMG. Residues glycine 316 and glycine 318 each contribute to the K(+) site. Serine 319 serves as a coordination point for IMP. Cysteine 321 provides a ligand contact to K(+). Catalysis depends on cysteine 321, which acts as the Thioimidate intermediate. IMP is bound by residues 354–356, 377–378, and 401–405; these read DGG, GS, and YRGMG. Arginine 417 serves as the catalytic Proton acceptor. Glutamine 429 serves as a coordination point for IMP. Residues glutamate 488, glycine 489, and glycine 490 each coordinate K(+).

Belongs to the IMPDH/GMPR family. As to quaternary structure, homotetramer. It depends on K(+) as a cofactor.

Its subcellular location is the cytoplasm. It carries out the reaction IMP + NAD(+) + H2O = XMP + NADH + H(+). The protein operates within purine metabolism; XMP biosynthesis via de novo pathway; XMP from IMP: step 1/1. Mycophenolic acid (MPA) is a non-competitive inhibitor that prevents formation of the closed enzyme conformation by binding to the same site as the amobile flap. In contrast, mizoribine monophosphate (MZP) is a competitive inhibitor that induces the closed conformation. MPA is a potent inhibitor of mammalian IMPDHs but a poor inhibitor of the bacterial enzymes. MZP is a more potent inhibitor of bacterial IMPDH. Catalyzes the conversion of inosine 5'-phosphate (IMP) to xanthosine 5'-phosphate (XMP), the first committed and rate-limiting step in the de novo synthesis of guanine nucleotides, and therefore plays an important role in the regulation of cell growth. The sequence is that of Inosine-5'-monophosphate dehydrogenase 2 from Arabidopsis thaliana (Mouse-ear cress).